We begin with the raw amino-acid sequence, 239 residues long: Purine nucleoside phosphorylase DeoD-type (239 aa).

His5 contributes to the a purine D-ribonucleoside binding site. Residues Gly21, Arg25, Arg44, and Arg88–Ser91 each bind phosphate. Residues Glu180 to Glu182 and Ser204 to Asp205 contribute to the a purine D-ribonucleoside site. Asp205 serves as the catalytic Proton donor.

This sequence belongs to the PNP/UDP phosphorylase family. In terms of assembly, homohexamer; trimer of homodimers.

The enzyme catalyses a purine D-ribonucleoside + phosphate = a purine nucleobase + alpha-D-ribose 1-phosphate. It catalyses the reaction a purine 2'-deoxy-D-ribonucleoside + phosphate = a purine nucleobase + 2-deoxy-alpha-D-ribose 1-phosphate. Functionally, catalyzes the reversible phosphorolytic breakdown of the N-glycosidic bond in the beta-(deoxy)ribonucleoside molecules, with the formation of the corresponding free purine bases and pentose-1-phosphate. In Citrobacter koseri (strain ATCC BAA-895 / CDC 4225-83 / SGSC4696), this protein is Purine nucleoside phosphorylase DeoD-type.